The primary structure comprises 145 residues: Actin-depolymerizing factor 11 (145 aa).

An ADF-H domain is found at 11-145 (SSGIGVAAEC…DIELLRERAH (135 aa)).

It belongs to the actin-binding proteins ADF family.

Functionally, actin-depolymerizing protein. Severs actin filaments (F-actin) and binds to actin monomers. This Oryza sativa subsp. japonica (Rice) protein is Actin-depolymerizing factor 11 (ADF11).